The following is a 490-amino-acid chain: Cobyric acid synthase (490 aa).

Residues 253–440 form the GATase cobBQ-type domain; it reads KLRVAAPAAP…LHGVFDEPAA (188 aa). The active-site Nucleophile is the C334. The active site involves H432.

Belongs to the CobB/CobQ family. CobQ subfamily.

It participates in cofactor biosynthesis; adenosylcobalamin biosynthesis. Catalyzes amidations at positions B, D, E, and G on adenosylcobyrinic A,C-diamide. NH(2) groups are provided by glutamine, and one molecule of ATP is hydrogenolyzed for each amidation. The chain is Cobyric acid synthase from Chromobacterium violaceum (strain ATCC 12472 / DSM 30191 / JCM 1249 / CCUG 213 / NBRC 12614 / NCIMB 9131 / NCTC 9757 / MK).